Consider the following 641-residue polypeptide: Tetracycline resistance protein TetS (641 aa).

The region spanning 1 to 242 is the tr-type G domain; that stretch reads MKIINIGILA…VITSKLFSPT (242 aa). Residues 10–17, 74–78, and 128–131 contribute to the GTP site; these read AHVDAGKT, DTPGH, and NKID.

It belongs to the TRAFAC class translation factor GTPase superfamily. Classic translation factor GTPase family. TetM/TetO subfamily.

Its function is as follows. Abolishes the inhibitory effect of tetracyclin on protein synthesis by a non-covalent modification of the ribosomes. This chain is Tetracycline resistance protein TetS (tetS), found in Listeria monocytogenes.